A 432-amino-acid chain; its full sequence is MDFLEAEGGWNLSFSGSGYMGLYHVGVTQCLRQRAPRLIQGARRFYGSSSGALNAMAIVFGKSADFACSNLLDLVKLVERLSLGIFHPAYGPAEHIRKKLYENLPDNCHILASQRLGISMTRWPDGKNFIVTDFATRDEFIQALICTLYLPLYCGVIPPAFRGQRFIDGALSNNLPFSDCPTTITVSPFNGTVDICPQNISHSLFELTAFNASFQISTRNFFRGLKSVFPPKPEVVADHCRQGYLDALRFLERRGLTKEPVLWSLVSKEPPALVEGPRGTGHDQGQKTGPTVRWDIPNVLVKDVPNFELLSPELEAALRKACKRDFWTRVQCSVPGKVLAYLLLPCTLPFEYAYFRSRRLMEWLPEAPDDLDWMRSILKSTTLEVYSMAKSWLLRLGSPPGTRADSGLLRQQRGTAPSGNRPLNHRWFPGMD.

A PNPLA domain is found at 12-181 (LSFSGSGYMG…SNNLPFSDCP (170 aa)). The GXGXXG motif lies at 16–21 (GSGYMG). Positions 47-51 (GSSSG) match the GXSXG motif. Residue S49 is the Nucleophile of the active site. D168 functions as the Proton acceptor in the catalytic mechanism. The DGA/G signature appears at 168–170 (DGA). Residues 404 to 423 (ADSGLLRQQRGTAPSGNRPL) are disordered.

The enzyme catalyses a triacylglycerol + H2O = a diacylglycerol + a fatty acid + H(+). Its function is as follows. Has abundant triacylglycerol lipase activity. This Mus musculus (Mouse) protein is Patatin-like phospholipase domain-containing protein 5.